The primary structure comprises 869 residues: Sodium-dependent phosphate transporter (869 aa).

The Extracellular segment spans residues 1 to 18 (MEAVAELSAPSLAGAPGE). The chain crosses the membrane as a helical span at residues 19–39 (YTWIVAVAGVTCFLTAFAIGA). The Cytoplasmic portion of the chain corresponds to 40–54 (NDVANTFSSSVGSRA). The chain crosses the membrane as a helical span at residues 55–75 (IPLWAAIGMSAVLETVGATLL). The Extracellular portion of the chain corresponds to 76–97 (GGAVTDSIRSKIIDFEVFRETP). The helical transmembrane segment at 98 to 118 (SILMTGMLCALVGAGLWLFLA) threads the bilayer. The Cytoplasmic segment spans residues 119–120 (NH). The helical transmembrane segment at 121–141 (LGLPVSTTHSIIGALLGFGLA) threads the bilayer. Topologically, residues 142-154 (SGNVRAVKWTQVA) are extracellular. Residues 155–175 (FIVGSWVAAPLAASAAGATIF) traverse the membrane as a helical segment. At 176–196 (VCMRRLILRSRQPLRRAKRFL) the chain is on the cytoplasmic side. The helical transmembrane segment at 197-217 (WIFIYLITLTFSVFLVFKNFF) threads the bilayer. The Extracellular portion of the chain corresponds to 218 to 250 (ELNVSCDQMVAGGRVEHFEPCRISRWADAHSGT). A helical transmembrane segment spans residues 251-271 (ALGIAVALSVALTFVISCLVY). Residues 272–720 (RFAFYRVESY…SGSADSEIGS (449 aa)) are Cytoplasmic-facing. 3 disordered regions span residues 286 to 312 (KRSSRTEPRDASEEGTGPSHARPGGLL), 374 to 401 (AAAAKPDVGTAAQSPESRFAADPVGSSV), and 453 to 571 (SAFL…KRER). A compositionally biased stretch (low complexity) spans 457-481 (SSPSSSVPPSSPSPSSTPSSPSASP). The segment covering 482-491 (RRPPSRPPVP) has biased composition (pro residues). Over residues 492–509 (RTCSPAPVSPSVPRAFAS) the composition is skewed to low complexity. Positions 556–571 (PHPERRDEVPAAKRER) are enriched in basic and acidic residues. A helical transmembrane segment spans residues 721-741 (PWYILLFGGLSMSLGLALLGY). At 742–759 (RVIKTVGVKLVKITPARG) the chain is on the extracellular side. A helical transmembrane segment spans residues 760 to 780 (FSMELGAAWTVLIFSAIGIPL). Topologically, residues 781–837 (STTHCAVGSTVGVGLMEPKHPRRETGDGPVAEGEEPKKRAVQCPVINTASVNWKLFG) are cytoplasmic. Residues 838 to 858 (GVFVSWIITIAFSALVTAALF) traverse the membrane as a helical segment. Residues 859 to 869 (SFAAYSPRMVS) are Extracellular-facing.

Belongs to the inorganic phosphate transporter (PiT) (TC 2.A.20) family.

Its subcellular location is the cell membrane. The protein resides in the vacuole membrane. It is found in the cytoplasmic vesicle membrane. The enzyme catalyses 2 Na(+)(out) + phosphate(out) = 2 Na(+)(in) + phosphate(in). Sodium-phosphate symporter which preferentially transports the monovalent form of phosphate with a stoichiometry of two sodium ions per phosphate ion. Plays a role in stabilizing the cytosolic pH and osmoregulation. May be required for optimal virulence of parasites in vivo. In Toxoplasma gondii (strain ATCC 50861 / VEG), this protein is Sodium-dependent phosphate transporter.